Reading from the N-terminus, the 479-residue chain is Protein phosphatase 1B (479 aa).

The span at 1–14 (MGAFLDKPKTEKHN) shows a compositional bias: basic and acidic residues. The segment at 1 to 20 (MGAFLDKPKTEKHNAHGAGN) is disordered. A lipid anchor (N-myristoyl glycine) is attached at Gly2. Residue Lys12 forms a Glycyl lysine isopeptide (Lys-Gly) (interchain with G-Cter in ISG15) linkage. In terms of domain architecture, PPM-type phosphatase spans 23–295 (RYGLSSMQGW…DNMSIVLVCF (273 aa)). 2 residues coordinate Mn(2+): Asp60 and Gly61. A Glycyl lysine isopeptide (Lys-Gly) (interchain with G-Cter in ISG15) cross-link involves residue Lys142. Mn(2+) is bound by residues Asp243 and Asp286. Ser386 carries the post-translational modification Phosphoserine. The segment at 423-479 (VEGEESPAEPAATATSSNSDAGNPVTMQESHTESESGLAELDSSNEDAGTKMSGEKI) is disordered. Residues 430–439 (AEPAATATSS) are compositionally biased toward low complexity. Residues 440–451 (NSDAGNPVTMQE) show a composition bias toward polar residues.

Belongs to the PP2C family. As to quaternary structure, monomer. Interacts with PAK6. Interacts with the phosphorylated form of IKBKB/IKKB. The cofactor is Mg(2+). Mn(2+) serves as cofactor. In terms of processing, isgylation negatively regulates its activity. N-myristoylation is essential for the recognition of its substrates for dephosphorylation. In terms of tissue distribution, highly expressed in heart and skeletal muscle.

The protein localises to the cytoplasm. Its subcellular location is the cytosol. The protein resides in the membrane. It carries out the reaction O-phospho-L-seryl-[protein] + H2O = L-seryl-[protein] + phosphate. The catalysed reaction is O-phospho-L-threonyl-[protein] + H2O = L-threonyl-[protein] + phosphate. In terms of biological role, enzyme with a broad specificity. Dephosphorylates CDK2 and CDK6 in vitro. Dephosphorylates PRKAA1 and PRKAA2. Inhibits TBK1-mediated antiviral signaling by dephosphorylating it at 'Ser-172'. Plays an important role in the termination of TNF-alpha-mediated NF-kappa-B activation through dephosphorylating and inactivating IKBKB/IKKB. The chain is Protein phosphatase 1B (PPM1B) from Homo sapiens (Human).